The sequence spans 336 residues: MPSCTSFPIGTRKSKLAVIQSEIIREELEKHYPHLEFPIISRDTIGDEILSKALFEFKRQLAKSLWTRELEALLVTNQCRILVHSLKDLPSEMPDGMVIACIPKRSCPLDAIVFKAGSHYKTVADLPPGSVVGTSSIRRRALLARNFPHLRFVDIRGNVGTRLAKLDAPDSQFDCLVLAAAGLFRLGLKDRIAQMLTAPFVYYAVGQGALAVEVRADDKEMIEMLKPLQHQETLYACLAERALMKRLQGGCAIPIGVQTDVLAISNSSYRISLLGTVLSADGLRAAFGNAEAVVSSEEEAEELGITVALALLKNGAGPILEEHQRSSDSEESLKNY.

At cysteine 251 the chain carries S-(dipyrrolylmethanemethyl)cysteine. Phosphoserine occurs at positions 327 and 329.

The protein belongs to the HMBS family. Dipyrromethane serves as cofactor.

The enzyme catalyses 4 porphobilinogen + H2O = hydroxymethylbilane + 4 NH4(+). The protein operates within porphyrin-containing compound metabolism; protoporphyrin-IX biosynthesis; coproporphyrinogen-III from 5-aminolevulinate: step 2/4. Its function is as follows. Tetrapolymerization of the monopyrrole PBG into the hydroxymethylbilane pre-uroporphyrinogen in several discrete steps. The protein is Porphobilinogen deaminase (hem3) of Schizosaccharomyces pombe (strain 972 / ATCC 24843) (Fission yeast).